Reading from the N-terminus, the 208-residue chain is Uracil phosphoribosyltransferase (208 aa).

Residues Arg-78, Arg-103, and 130 to 138 (DPMLATGGS) each bind 5-phospho-alpha-D-ribose 1-diphosphate. Uracil contacts are provided by residues Ile-193 and 198 to 200 (GDA). Asp-199 is a binding site for 5-phospho-alpha-D-ribose 1-diphosphate.

The protein belongs to the UPRTase family. The cofactor is Mg(2+).

The catalysed reaction is UMP + diphosphate = 5-phospho-alpha-D-ribose 1-diphosphate + uracil. The protein operates within pyrimidine metabolism; UMP biosynthesis via salvage pathway; UMP from uracil: step 1/1. With respect to regulation, allosterically activated by GTP. Catalyzes the conversion of uracil and 5-phospho-alpha-D-ribose 1-diphosphate (PRPP) to UMP and diphosphate. The polypeptide is Uracil phosphoribosyltransferase (Aliivibrio fischeri (strain MJ11) (Vibrio fischeri)).